The chain runs to 487 residues: UDP-N-acetylmuramate--L-alanine ligase (487 aa).

129–135 contacts ATP; the sequence is GTHGKTT.

Belongs to the MurCDEF family.

The protein localises to the cytoplasm. It catalyses the reaction UDP-N-acetyl-alpha-D-muramate + L-alanine + ATP = UDP-N-acetyl-alpha-D-muramoyl-L-alanine + ADP + phosphate + H(+). It functions in the pathway cell wall biogenesis; peptidoglycan biosynthesis. In terms of biological role, cell wall formation. The protein is UDP-N-acetylmuramate--L-alanine ligase of Aliivibrio salmonicida (strain LFI1238) (Vibrio salmonicida (strain LFI1238)).